The following is a 142-amino-acid chain: Large ribosomal subunit protein uL13 (142 aa).

The protein belongs to the universal ribosomal protein uL13 family. In terms of assembly, part of the 50S ribosomal subunit.

In terms of biological role, this protein is one of the early assembly proteins of the 50S ribosomal subunit, although it is not seen to bind rRNA by itself. It is important during the early stages of 50S assembly. In Desulfotalea psychrophila (strain LSv54 / DSM 12343), this protein is Large ribosomal subunit protein uL13.